The following is a 40-amino-acid chain: MLVVIMFFIAFAFCSWLSYSYLRPYISTKELNKSRMFYIT.

Residues 2–22 form a helical membrane-spanning segment; that stretch reads LVVIMFFIAFAFCSWLSYSYL. The Virion surface segment spans residues 23–40; that stretch reads RPYISTKELNKSRMFYIT.

It belongs to the orthopoxvirus OPG076 family. As to quaternary structure, component of the entry fusion complex (EFC) composed of OPG053, OPG076, OPG086, OPG094, OPG095, OPG099, OPG107, OPG143, OPG104, OPG147 and OPG155. Except for OPG095 and OPG053, each of the EFC proteins is required for assembly or stability of the complex. Unglycosylated because produced in viral factories instead of the classic ER -Golgi route.

It localises to the virion membrane. Functionally, component of the entry fusion complex (EFC), which consists of 11 proteins. During cell infection, this complex mediates entry of the virion core into the host cytoplasm by a two-step mechanism consisting of lipid mixing of the viral and cellular membranes and subsequent pore formation. The sequence is that of Entry-fusion complex protein OPG076 (OPG076) from Variola virus (isolate Human/India/Ind3/1967) (VARV).